The chain runs to 485 residues: Probable phosphomannomutase (485 aa).

Ser86 (phosphoserine intermediate) is an active-site residue. Ser86, Asp236, Asp238, and Asp240 together coordinate Mg(2+).

It belongs to the phosphohexose mutase family. Mg(2+) is required as a cofactor.

It carries out the reaction alpha-D-mannose 1-phosphate = D-mannose 6-phosphate. This is Probable phosphomannomutase from Haemophilus influenzae (strain ATCC 51907 / DSM 11121 / KW20 / Rd).